The sequence spans 250 residues: UPF0259 membrane protein PC1_1998 (250 aa).

6 helical membrane passes run 20-40 (FISI…LNHA), 90-110 (FAAL…IQLV), 132-152 (LLFL…LLVI), 156-176 (LLAI…SGIF), 192-212 (ATAP…LVVS), and 222-242 (LGVV…IYLF).

It belongs to the UPF0259 family.

It is found in the cell inner membrane. The protein is UPF0259 membrane protein PC1_1998 of Pectobacterium carotovorum subsp. carotovorum (strain PC1).